A 122-amino-acid polypeptide reads, in one-letter code: Large ribosomal subunit protein uL14 (122 aa).

It belongs to the universal ribosomal protein uL14 family. As to quaternary structure, part of the 50S ribosomal subunit. Forms a cluster with proteins L3 and L19. In the 70S ribosome, L14 and L19 interact and together make contacts with the 16S rRNA in bridges B5 and B8.

Functionally, binds to 23S rRNA. Forms part of two intersubunit bridges in the 70S ribosome. This chain is Large ribosomal subunit protein uL14, found in Staphylococcus aureus (strain MW2).